A 126-amino-acid chain; its full sequence is NADP-reducing hydrogenase subunit HndB (126 aa).

Heterotetramer composed of HndA, HndB, HndC and HndD subunits. HndA and HndB could form a heterodimeric intermediate in the electron transfer between the active site of hydrogenase subunit HndD and the NADP reduction site of the reducing subunit HndC.

The catalysed reaction is H2 + NADP(+) = NADPH + H(+). Inhibited by oxygen. Catalyzes the reduction of NADP in the presence of molecular H2 to yield NADPH. In Solidesulfovibrio fructosivorans (Desulfovibrio fructosivorans), this protein is NADP-reducing hydrogenase subunit HndB (hndB).